The chain runs to 344 residues: Oxygen sensor histidine kinase NreB (344 aa).

[4Fe-4S] cluster contacts are provided by Cys58, Cys61, Cys73, and Cys76. The Histidine kinase domain maps to 152–344 (RISRELHDSV…GTNVTLNIPI (193 aa)). Phosphohistidine; by autocatalysis is present on His158.

The cofactor is [4Fe-4S] cluster. Autophosphorylated.

It localises to the cytoplasm. It carries out the reaction ATP + protein L-histidine = ADP + protein N-phospho-L-histidine.. Functionally, member of the two-component regulatory system NreB/NreC involved in the control of dissimilatory nitrate/nitrite reduction in response to oxygen. NreB functions as a direct oxygen sensor histidine kinase which is autophosphorylated, in the absence of oxygen, probably at the conserved histidine residue, and transfers its phosphate group probably to a conserved aspartate residue of NreC. NreB/NreC activates the expression of the nitrate (narGHJI) and nitrite (nir) reductase operons, as well as the putative nitrate transporter gene narT. The protein is Oxygen sensor histidine kinase NreB (nreB) of Staphylococcus aureus (strain Mu3 / ATCC 700698).